Consider the following 439-residue polypeptide: Probable guanine deaminase (439 aa).

Residues histidine 76 and histidine 78 each contribute to the Zn(2+) site. Substrate is bound by residues histidine 78 to glutamine 81, arginine 203 to phenylalanine 204, histidine 231 to glutamate 234, and aspartate 321. The Zn(2+) site is built by histidine 231 and aspartate 321.

The protein belongs to the metallo-dependent hydrolases superfamily. ATZ/TRZ family. Zn(2+) is required as a cofactor.

It catalyses the reaction guanine + H2O + H(+) = xanthine + NH4(+). Its pathway is purine metabolism; guanine degradation; xanthine from guanine: step 1/1. Functionally, catalyzes the hydrolytic deamination of guanine, producing xanthine and ammonia. The polypeptide is Probable guanine deaminase (guaD) (Deinococcus radiodurans (strain ATCC 13939 / DSM 20539 / JCM 16871 / CCUG 27074 / LMG 4051 / NBRC 15346 / NCIMB 9279 / VKM B-1422 / R1)).